We begin with the raw amino-acid sequence, 392 residues long: L-rhamnonate dehydratase (392 aa).

The substrate site is built by H22 and R48. D214, E240, and E268 together coordinate Mg(2+). H318 functions as the Proton acceptor in the catalytic mechanism. E338 contacts substrate.

The protein belongs to the mandelate racemase/muconate lactonizing enzyme family. RhamD subfamily. In terms of assembly, homooctamer; tetramer of dimers. Requires Mg(2+) as cofactor.

The catalysed reaction is L-rhamnonate = 2-dehydro-3-deoxy-L-rhamnonate + H2O. Its function is as follows. Catalyzes the dehydration of L-rhamnonate to 2-keto-3-deoxy-L-rhamnonate (KDR). The sequence is that of L-rhamnonate dehydratase from Paraburkholderia phytofirmans (strain DSM 17436 / LMG 22146 / PsJN) (Burkholderia phytofirmans).